A 123-amino-acid polypeptide reads, in one-letter code: uncharacterized protein (123 aa).

The next 3 helical transmembrane spans lie at 7 to 29 (VKHL…FDAV), 44 to 66 (FFIH…VHRI), and 79 to 101 (LGLY…AAMA).

It is found in the cell membrane. This is an uncharacterized protein from Bacillus subtilis (strain 168).